Here is a 549-residue protein sequence, read N- to C-terminus: MRSDQIKRGAVRAPNRCLLYSTGISPGDLDKPFIGIASSFTDLVPGHVAMRDLERYVERGIAAGGGVPFIFGAPAVCDGIAMGHSGMHYSLGSREIIADLVETVANAHMLDGLILLSNCDKVTPGMLMAAARLNIPAIVVTAGAMMTGMYDKKRRSMVRDTFEAVGQFQAGKITEKQLSELEMAACPGAGACQGMYTANTMACLTETMGMSMRGCATTLAVSAKKKRIAYESGIRVVALVKKDVKPRDILTLAAFKNAIVADMALGGSTNTVLHLPAIANEAGIELPLELFDEISKKTPQIACLEPAGDHYMEDLDNAGGIPAVLFAIQKNLAHSKTVSGFDIIEIANSAEILDEYVIRAKNPYKPEGGIAILRGNIAPRGCVVKQAAVSEKMKVFSGRARVFNSEDNAMKAILDNKIVPGDIVVIRYEGPAGGPGMREMLSPTSALHGMGLSDSVALLTDGRFSGGTRGPCIGHISPEAAADGAIVAINEGDTININIPERTLNVELTDDEIKARIGKVIKPEPKIKTGYMARYAKLVQSADTGAVLK.

A Mg(2+)-binding site is contributed by Asp-78. [2Fe-2S] cluster is bound at residue Cys-119. 2 residues coordinate Mg(2+): Asp-120 and Lys-121. Lys-121 is subject to N6-carboxylysine. A [2Fe-2S] cluster-binding site is contributed by Cys-192. Glu-439 contacts Mg(2+). Catalysis depends on Ser-465, which acts as the Proton acceptor.

It belongs to the IlvD/Edd family. Homodimer. The cofactor is [2Fe-2S] cluster. Requires Mg(2+) as cofactor.

The catalysed reaction is (2R)-2,3-dihydroxy-3-methylbutanoate = 3-methyl-2-oxobutanoate + H2O. The enzyme catalyses (2R,3R)-2,3-dihydroxy-3-methylpentanoate = (S)-3-methyl-2-oxopentanoate + H2O. The protein operates within amino-acid biosynthesis; L-isoleucine biosynthesis; L-isoleucine from 2-oxobutanoate: step 3/4. It functions in the pathway amino-acid biosynthesis; L-valine biosynthesis; L-valine from pyruvate: step 3/4. Functionally, functions in the biosynthesis of branched-chain amino acids. Catalyzes the dehydration of (2R,3R)-2,3-dihydroxy-3-methylpentanoate (2,3-dihydroxy-3-methylvalerate) into 2-oxo-3-methylpentanoate (2-oxo-3-methylvalerate) and of (2R)-2,3-dihydroxy-3-methylbutanoate (2,3-dihydroxyisovalerate) into 2-oxo-3-methylbutanoate (2-oxoisovalerate), the penultimate precursor to L-isoleucine and L-valine, respectively. The chain is Dihydroxy-acid dehydratase from Endomicrobium trichonymphae.